The primary structure comprises 1012 residues: DNA polymerase catalytic subunit (1012 aa).

The tract at residues 1–31 (MDFFNPFIDPTRGGPRNTVRQPTPSQSPTVP) is disordered. Over residues 21-31 (QPTPSQSPTVP) the composition is skewed to low complexity.

The protein belongs to the DNA polymerase type-B family. As to quaternary structure, forms a complex with the ssDNA-binding protein, the DNA polymerase processivity factor, and the alkaline exonuclease. Interacts with the putative helicase-primase complex subunit; this interaction may coordinate leading and lagging strand DNA synthesis at the replication fork.

The protein resides in the host nucleus. The catalysed reaction is DNA(n) + a 2'-deoxyribonucleoside 5'-triphosphate = DNA(n+1) + diphosphate. It catalyses the reaction Endonucleolytic cleavage to 5'-phosphomonoester.. In terms of biological role, replicates viral genomic DNA. The replication complex is composed of six viral proteins: the DNA polymerase, processivity factor, primase, primase-associated factor, helicase, and ssDNA-binding protein. Additionally, the polymerase contains an intrinsic ribonuclease H (RNase H) activity that specifically degrades RNA/DNA heteroduplexes or duplex DNA substrates in the 5' to 3' direction. Therefore, it can catalyze the excision of the RNA primers that initiate the synthesis of Okazaki fragments at a replication fork during viral DNA replication. This chain is DNA polymerase catalytic subunit (ORF9), found in Human herpesvirus 8 type P (isolate GK18) (HHV-8).